Reading from the N-terminus, the 156-residue chain is ATP synthase subunit b (156 aa).

Residues 5-25 (LTLIGQAIAFAIFVAFCMKFV) form a helical membrane-spanning segment.

The protein belongs to the ATPase B chain family. F-type ATPases have 2 components, F(1) - the catalytic core - and F(0) - the membrane proton channel. F(1) has five subunits: alpha(3), beta(3), gamma(1), delta(1), epsilon(1). F(0) has three main subunits: a(1), b(2) and c(10-14). The alpha and beta chains form an alternating ring which encloses part of the gamma chain. F(1) is attached to F(0) by a central stalk formed by the gamma and epsilon chains, while a peripheral stalk is formed by the delta and b chains.

It is found in the cell inner membrane. Its function is as follows. F(1)F(0) ATP synthase produces ATP from ADP in the presence of a proton or sodium gradient. F-type ATPases consist of two structural domains, F(1) containing the extramembraneous catalytic core and F(0) containing the membrane proton channel, linked together by a central stalk and a peripheral stalk. During catalysis, ATP synthesis in the catalytic domain of F(1) is coupled via a rotary mechanism of the central stalk subunits to proton translocation. Functionally, component of the F(0) channel, it forms part of the peripheral stalk, linking F(1) to F(0). The chain is ATP synthase subunit b from Acinetobacter baylyi (strain ATCC 33305 / BD413 / ADP1).